The primary structure comprises 377 residues: Succinyl-diaminopimelate desuccinylase (377 aa).

His66 is a binding site for Zn(2+). The active site involves Asp68. Residue Asp99 participates in Zn(2+) binding. The active-site Proton acceptor is the Glu133. The Zn(2+) site is built by Glu134, Glu162, and His348.

Belongs to the peptidase M20A family. DapE subfamily. Homodimer. Requires Zn(2+) as cofactor. Co(2+) is required as a cofactor.

The enzyme catalyses N-succinyl-(2S,6S)-2,6-diaminopimelate + H2O = (2S,6S)-2,6-diaminopimelate + succinate. It functions in the pathway amino-acid biosynthesis; L-lysine biosynthesis via DAP pathway; LL-2,6-diaminopimelate from (S)-tetrahydrodipicolinate (succinylase route): step 3/3. Catalyzes the hydrolysis of N-succinyl-L,L-diaminopimelic acid (SDAP), forming succinate and LL-2,6-diaminopimelate (DAP), an intermediate involved in the bacterial biosynthesis of lysine and meso-diaminopimelic acid, an essential component of bacterial cell walls. This Histophilus somni (strain 129Pt) (Haemophilus somnus) protein is Succinyl-diaminopimelate desuccinylase.